The following is a 157-amino-acid chain: 2-C-methyl-D-erythritol 2,4-cyclodiphosphate synthase (157 aa).

Residues aspartate 8 and histidine 10 each coordinate a divalent metal cation. 4-CDP-2-C-methyl-D-erythritol 2-phosphate is bound by residues 8 to 10 (DVH) and 34 to 35 (HS). Position 42 (histidine 42) interacts with a divalent metal cation. 4-CDP-2-C-methyl-D-erythritol 2-phosphate contacts are provided by residues 56 to 58 (DIG), 61 to 65 (FPDTD), 132 to 135 (TTTE), phenylalanine 139, and arginine 142.

It belongs to the IspF family. Homotrimer. A divalent metal cation serves as cofactor.

The catalysed reaction is 4-CDP-2-C-methyl-D-erythritol 2-phosphate = 2-C-methyl-D-erythritol 2,4-cyclic diphosphate + CMP. It functions in the pathway isoprenoid biosynthesis; isopentenyl diphosphate biosynthesis via DXP pathway; isopentenyl diphosphate from 1-deoxy-D-xylulose 5-phosphate: step 4/6. Functionally, involved in the biosynthesis of isopentenyl diphosphate (IPP) and dimethylallyl diphosphate (DMAPP), two major building blocks of isoprenoid compounds. Catalyzes the conversion of 4-diphosphocytidyl-2-C-methyl-D-erythritol 2-phosphate (CDP-ME2P) to 2-C-methyl-D-erythritol 2,4-cyclodiphosphate (ME-CPP) with a corresponding release of cytidine 5-monophosphate (CMP). The protein is 2-C-methyl-D-erythritol 2,4-cyclodiphosphate synthase of Geobacter metallireducens (strain ATCC 53774 / DSM 7210 / GS-15).